The chain runs to 247 residues: Protein GrpE (247 aa).

Disordered stretches follow at residues 1-64 (MNDE…QALD) and 214-247 (SMGP…EKSD). Composition is skewed to polar residues over residues 30-39 (DEPSLSNVAE), 49-63 (DVTS…SQAL), and 228-241 (TEQS…TDQQ).

This sequence belongs to the GrpE family. In terms of assembly, homodimer.

The protein localises to the cytoplasm. Its function is as follows. Participates actively in the response to hyperosmotic and heat shock by preventing the aggregation of stress-denatured proteins, in association with DnaK and GrpE. It is the nucleotide exchange factor for DnaK and may function as a thermosensor. Unfolded proteins bind initially to DnaJ; upon interaction with the DnaJ-bound protein, DnaK hydrolyzes its bound ATP, resulting in the formation of a stable complex. GrpE releases ADP from DnaK; ATP binding to DnaK triggers the release of the substrate protein, thus completing the reaction cycle. Several rounds of ATP-dependent interactions between DnaJ, DnaK and GrpE are required for fully efficient folding. The protein is Protein GrpE of Prochlorococcus marinus (strain MIT 9211).